The chain runs to 186 residues: Protein GrpE (186 aa).

Belongs to the GrpE family. As to quaternary structure, homodimer.

It localises to the cytoplasm. In terms of biological role, participates actively in the response to hyperosmotic and heat shock by preventing the aggregation of stress-denatured proteins, in association with DnaK and GrpE. It is the nucleotide exchange factor for DnaK and may function as a thermosensor. Unfolded proteins bind initially to DnaJ; upon interaction with the DnaJ-bound protein, DnaK hydrolyzes its bound ATP, resulting in the formation of a stable complex. GrpE releases ADP from DnaK; ATP binding to DnaK triggers the release of the substrate protein, thus completing the reaction cycle. Several rounds of ATP-dependent interactions between DnaJ, DnaK and GrpE are required for fully efficient folding. This is Protein GrpE from Novosphingobium aromaticivorans (strain ATCC 700278 / DSM 12444 / CCUG 56034 / CIP 105152 / NBRC 16084 / F199).